A 1333-amino-acid chain; its full sequence is DNA-directed RNA polymerase subunit beta' (1333 aa).

4 residues coordinate Zn(2+): Cys60, Cys62, Cys75, and Cys78. Mg(2+)-binding residues include Asp535, Asp537, and Asp539. Positions 901, 983, 990, and 993 each coordinate Zn(2+).

It belongs to the RNA polymerase beta' chain family. The RNAP catalytic core consists of 2 alpha, 1 beta, 1 beta' and 1 omega subunit. When a sigma factor is associated with the core the holoenzyme is formed, which can initiate transcription. The cofactor is Mg(2+). Requires Zn(2+) as cofactor.

It carries out the reaction RNA(n) + a ribonucleoside 5'-triphosphate = RNA(n+1) + diphosphate. Functionally, DNA-dependent RNA polymerase catalyzes the transcription of DNA into RNA using the four ribonucleoside triphosphates as substrates. The polypeptide is DNA-directed RNA polymerase subunit beta' (Corynebacterium glutamicum (strain ATCC 13032 / DSM 20300 / JCM 1318 / BCRC 11384 / CCUG 27702 / LMG 3730 / NBRC 12168 / NCIMB 10025 / NRRL B-2784 / 534)).